Reading from the N-terminus, the 187-residue chain is MDMQNENERLMVFEHARKVAEATYVKNPLDAENLTRWAGALLELSQFQTEPKQMILEAILKLGEALVIDPKKHDALWLIGNAHLSFGFLSSDQTEASDNFEKASQFFQLAVEEQPESELYRKSLTLASKAPELHTGGTAGPSSNSAKTMKQKKTSEFKYDVFGWVILASYVVAWISFANSQTPVSRQ.

Position 1 is an N-acetylmethionine (Met1). At 1-160 (MDMQNENERL…QKKTSEFKYD (160 aa)) the chain is on the cytoplasmic side. One copy of the TPR repeat lies at 84–117 (LSFGFLSSDQTEASDNFEKASQFFQLAVEEQPES). Residues 161–178 (VFGWVILASYVVAWISFA) form a helical membrane-spanning segment. The Mitochondrial intermembrane segment spans residues 179 to 187 (NSQTPVSRQ). The AKR2A-binding sequence (ABS) required for mitochondrion outer membrane targeting motif lies at 179–187 (NSQTPVSRQ).

It belongs to the Tom20 family. In terms of assembly, forms part of the preprotein translocase complex of the outer mitochondrial membrane (TOM complex) which consists of at least 6 different proteins (TOM5, TOM6, TOM7, TOM20, TOM22/TOM9 and TOM40). Interacts with a variety of mitochondrial precursor proteins. Interacts with AKR2A. Component of a mitochondrial large protein complex that contains, at least, MIC60, DGS1, TOM40, TOM20 proteins, and petC/RISP. In terms of processing, the N-terminus is blocked. In terms of tissue distribution, expressed in roots, flowers, young cotyledons and leaves.

It localises to the mitochondrion outer membrane. Its function is as follows. Central component of the receptor complex responsible for the recognition and translocation of cytosolically synthesized mitochondrial preproteins. Together with TOM22 functions as the transit peptide receptor at the surface of the mitochondrion outer membrane and facilitates the movement of preproteins into the translocation pore. In Arabidopsis thaliana (Mouse-ear cress), this protein is Mitochondrial import receptor subunit TOM20-4.